The primary structure comprises 188 residues: MGRGGRGVGGGRPEGHGASVEGGRTRQTEGMDLISPDPGRWAARFDRHRWRIRLALPQARTEHIGSTAIGTICAKDVVDILVGEVDVTAAAQALVSAGYVIEGERPNHIWLCWPDPQQREAVVHVVIAGGDIWHQRLLFRDFLKRSPAEARAYEALKQRLAAQTDDWGEYTAQKAAFVARILQRAAES.

Over residues 1–12 (MGRGGRGVGGGR) the composition is skewed to gly residues. The disordered stretch occupies residues 1–37 (MGRGGRGVGGGRPEGHGASVEGGRTRQTEGMDLISPD).

It belongs to the UPF0157 (GrpB) family.

The sequence is that of UPF0157 protein DR_2534 from Deinococcus radiodurans (strain ATCC 13939 / DSM 20539 / JCM 16871 / CCUG 27074 / LMG 4051 / NBRC 15346 / NCIMB 9279 / VKM B-1422 / R1).